We begin with the raw amino-acid sequence, 693 residues long: Golgin subfamily A member 6D (693 aa).

Residues 14–611 are a coiled coil; it reads LEESRQNKLA…KLLELQELVL (598 aa). 3 disordered regions span residues 20-70, 497-547, and 662-693; these read NKLA…GDSQ, LPGE…GTEQ, and VEPA…MQDT. Over residues 537–547 the composition is skewed to basic and acidic residues; sequence LPKEKADGTEQ. The span at 674–693 shows a compositional bias: polar residues; that stretch reads PHNNPTVQQIVQLSPVMQDT.

This sequence belongs to the GOLGA6 family.

This chain is Golgin subfamily A member 6D (GOLGA6D), found in Homo sapiens (Human).